An 80-amino-acid polypeptide reads, in one-letter code: Three-finger toxin MALT0059C (80 aa).

An N-terminal signal peptide occupies residues 1–21; sequence MRTLLLTLVVVTIVCLDLGNS. Cystine bridges form between cysteine 24–cysteine 41, cysteine 35–cysteine 60, cysteine 64–cysteine 72, and cysteine 73–cysteine 78.

It belongs to the three-finger toxin family. Short-chain subfamily. As to expression, expressed by the venom gland.

The protein localises to the secreted. Neurotoxin. Blocks muscular nicotinic acetylcholine receptors (nAChR). This is Three-finger toxin MALT0059C from Micrurus altirostris (Uruguayan coral snake).